The chain runs to 426 residues: Potassium channel subfamily K member 2 (426 aa).

At 1–61 the chain is on the cytoplasmic side; sequence MLASASRERP…SAINVMKWKT (61 aa). Important for GNG4 binding and L-glutamate release in astrocytes regions lie at residues 17–38 and 51–61; these read AAPD…LSFS and DSAINVMKWKT. A helical membrane pass occupies residues 62 to 82; the sequence is VSTIFLVVVLYLIIGATVFKA. 2 N-linked (GlcNAc...) asparagine glycosylation sites follow: N110 and N134. Positions 144-170 form an intramembrane region, pore-forming; the sequence is LGSSFFFAGTVITTIGFGNISPRTEGG. K(+)-binding residues include T157, I158, G159, and F160. The tract at residues 157–162 is selectivity filter 1; the sequence is TIGFGN. A helical transmembrane segment spans residues 172 to 192; it reads IFCIIYALLGIPLFGFLLAGV. At 193–222 the chain is on the cytoplasmic side; that stretch reads GDQLGTIFGKGIAKVEDTFIKWNVSQTKIR. The chain crosses the membrane as a helical span at residues 223-243; it reads IISTIIFILFGCVLFVALPAV. An intramembrane region (pore-forming) is located at residues 253–283; that stretch reads ALDAIYFVVITLTTIGFGDYVAGGSDIEYLD. K(+) contacts are provided by T266, I267, G268, and F269. The interval 266 to 271 is selectivity filter 2; the sequence is TIGFGD. The helical transmembrane segment at 288–308 threads the bilayer; sequence VVWFWILVGLAYFAAVLSMIG. At 309–426 the chain is on the cytoplasmic side; the sequence is DWLRVISKKT…EDIAVIENMK (118 aa). An interaction with AKAP5 region spans residues 313 to 326; sequence VISKKTKEEVGEFR. The essential for chloroform and halothane sensitivity stretch occupies residues 337–385; the sequence is TAEFKETRRRLSVEIYDKFQRATSVKRKLSAELAGNHNQELTPCRRTLS. Phosphoserine; by PKA is present on S348.

The protein belongs to the two pore domain potassium channel (TC 1.A.1.8) family. Homodimer; disulfide-linked. Forms heterodimers with other 2-pore domain K(+) channel subunits, such as KCNK1, KCNK4, KCNK10 and KCNK18. Interacts with AKAP5; the channel is recruited to postsynaptic microdomains by AKAP5 where it can integrate neurotransmitter receptor signals. Part of a complex composed of AKAP5 and ADRB2. Upon AKAP5 binding, the channel is no longer sensitive to intracellular acidification, membrane stretch or arachidonic acid stimuli. Interacts with POPDC1; the interaction enhances KCNK2 surface expression and is inhibited by cAMP. Interacts (via N-terminus) with G-protein subunit GNG4 (via C-terminus); this interaction confers ion selectivity to L-glutamate and Cl(-) anions. In terms of processing, phosphorylation at Ser-348 controls the reversible conversion from a leak channel to a voltage-dependent channel. In terms of tissue distribution, expressed in cardiomyocytes (at protein level). Expressed in various brain regions including the lateral olfactory tract, piriform cortex of the forebrain, paraventricular and anteromedial thalamic nuclei, brainstem, caudate putamen, nucleus accumbens, neocortex and interpeduncular nucleus. Detected in astrocytes in hippocampus stratum radiatum. Expressed in brain and kidney.

Its subcellular location is the cell membrane. It localises to the endoplasmic reticulum membrane. The protein resides in the cell projection. It is found in the axon. The protein localises to the dendrite. Its subcellular location is the postsynaptic density membrane. It localises to the sarcolemma. It catalyses the reaction K(+)(in) = K(+)(out). The catalysed reaction is L-glutamate(out) = L-glutamate(in). The enzyme catalyses chloride(in) = chloride(out). It carries out the reaction Rb(+)(in) = Rb(+)(out). It catalyses the reaction Cs(+)(in) = Cs(+)(out). With respect to regulation, activated by various stimuli including intracellular acidic pH, mechanical stretch and polyunsaturated fatty acids such as arachidonic acid. Its function is as follows. K(+) channel that conducts voltage-dependent outward rectifying currents upon membrane depolarization. Voltage sensing is coupled to K(+) electrochemical gradient in an 'ion flux gating' mode where outward but not inward ion flow opens the gate. Converts to voltage-independent 'leak' conductance mode upon stimulation by various stimuli including mechanical membrane stretch, acidic pH, heat and lipids. Reversibly converts between a voltage-insensitive K(+) 'leak' channel and a voltage-dependent outward rectifying K(+) channel in a phosphorylation-dependent manner. Homo- and heterodimerizes to form functional channels with distinct regulatory and gating properties. In trigeminal ganglia sensory neurons, the heterodimer of KCNK2/TREK-1 and KCNK18/TRESK inhibits neuronal firing and neurogenic inflammation by stabilizing the resting membrane potential at K(+) equilibrium potential as well as by regulating the threshold of action potentials and the spike frequency. At trigeminal A-beta afferent nerves, the heterodimer of KCNK2/TREK-1 and KCNK4/TRAAK is mostly coexpressed at nodes of Ranvier where it conducts voltage-independent mechanosensitive and thermosensitive currents, allowing rapid action potential repolarization, high speed and high frequence saltatory conduction on myelinated nerves to ensure prompt sensory responses. In hippocampal astrocytes, the heterodimer of KCNK2/TREK-1 and KCNK1/TWIK-1 allows passive K(+) conductance under basal conditions, but changes ion selectivity and becomes permeable to L-glutamate and Cl(-) ions upon binding to G-protein subunit GNG4 in stimulated astrocytes. Mediates rapid L-glutamate release in response to activation of G-protein-coupled receptors such as F2R and CNR1. In hippocampal pyramidal neurons, the homodimer of KCNK2/TREK-1 contributes to gamma-aminobutyric acid (GABA) B-induced slow inhibitory postsynaptic potential. Associates with AKAP5 and Gs-protein-coupled receptor B2AR at postsynaptic dense bodies and converts to a leak channel no longer sensitive to stimulation by arachidonic acid, acidic pH or mechanical stress, nor inhibited by Gq-coupled receptors but still under the negative control of Gs-coupled receptors. Permeable to other monovalent cations such as Rb(+) and Cs(+). Does not display channel activity but reduces the channel activity of isoform 1, isoform 2 and isoform 4 and reduces cell surface expression of isoform 2. This chain is Potassium channel subfamily K member 2, found in Rattus norvegicus (Rat).